A 568-amino-acid chain; its full sequence is 2-succinyl-5-enolpyruvyl-6-hydroxy-3-cyclohexene-1-carboxylate synthase (568 aa).

Belongs to the TPP enzyme family. MenD subfamily. Homodimer. It depends on Mg(2+) as a cofactor. Requires Mn(2+) as cofactor. Thiamine diphosphate is required as a cofactor.

It catalyses the reaction isochorismate + 2-oxoglutarate + H(+) = 5-enolpyruvoyl-6-hydroxy-2-succinyl-cyclohex-3-ene-1-carboxylate + CO2. Its pathway is quinol/quinone metabolism; 1,4-dihydroxy-2-naphthoate biosynthesis; 1,4-dihydroxy-2-naphthoate from chorismate: step 2/7. It participates in quinol/quinone metabolism; menaquinone biosynthesis. Its function is as follows. Catalyzes the thiamine diphosphate-dependent decarboxylation of 2-oxoglutarate and the subsequent addition of the resulting succinic semialdehyde-thiamine pyrophosphate anion to isochorismate to yield 2-succinyl-5-enolpyruvyl-6-hydroxy-3-cyclohexene-1-carboxylate (SEPHCHC). The polypeptide is 2-succinyl-5-enolpyruvyl-6-hydroxy-3-cyclohexene-1-carboxylate synthase (Haemophilus influenzae (strain ATCC 51907 / DSM 11121 / KW20 / Rd)).